A 519-amino-acid polypeptide reads, in one-letter code: Laccase-2 (519 aa).

An N-terminal signal peptide occupies residues 1–20 (MGLQRFSFFVTLALVARSLA). Plastocyanin-like domains lie at 22–147 (IGPV…FVVY) and 159–301 (VDNE…ILRY). Residue Asn74 is glycosylated (N-linked (GlcNAc...) asparagine). The Cu cation site is built by His84, His86, His129, and His131. 2 cysteine pairs are disulfide-bonded: Cys105/Cys508 and Cys137/Cys225. Residues Asn161, Asn228, Asn237, Asn271, Asn353, and Asn361 are each glycosylated (N-linked (GlcNAc...) asparagine). In terms of domain architecture, Plastocyanin-like 3 spans 368-490 (TVPVLLQILS…AGFAIVFAED (123 aa)). Cu cation-binding residues include His415, His418, and His420. N-linked (GlcNAc...) asparagine glycosylation is present at Asn456. Residues His472, Cys473, His474, and His478 each coordinate Cu cation.

The protein belongs to the multicopper oxidase family. The cofactor is Cu cation.

The protein resides in the secreted. It carries out the reaction 4 hydroquinone + O2 = 4 benzosemiquinone + 2 H2O. Its function is as follows. Lignin degradation and detoxification of lignin-derived products. In Trametes versicolor (White-rot fungus), this protein is Laccase-2 (LCC2).